A 236-amino-acid polypeptide reads, in one-letter code: 2,3,4,5-tetrahydropyridine-2,6-dicarboxylate N-acetyltransferase (236 aa).

Belongs to the transferase hexapeptide repeat family. DapH subfamily.

The catalysed reaction is (S)-2,3,4,5-tetrahydrodipicolinate + acetyl-CoA + H2O = L-2-acetamido-6-oxoheptanedioate + CoA. It participates in amino-acid biosynthesis; L-lysine biosynthesis via DAP pathway; LL-2,6-diaminopimelate from (S)-tetrahydrodipicolinate (acetylase route): step 1/3. Functionally, catalyzes the transfer of an acetyl group from acetyl-CoA to tetrahydrodipicolinate. This is 2,3,4,5-tetrahydropyridine-2,6-dicarboxylate N-acetyltransferase from Clostridium botulinum (strain Kyoto / Type A2).